The following is a 496-amino-acid chain: Glycerol kinase (496 aa).

Position 12 (Thr12) interacts with ADP. The ATP site is built by Thr12, Thr13, and Ser14. Thr12 provides a ligand contact to sn-glycerol 3-phosphate. Residue Arg16 coordinates ADP. Positions 82, 83, and 134 each coordinate sn-glycerol 3-phosphate. Glycerol is bound by residues Arg82, Glu83, and Tyr134. Position 230 is a phosphohistidine; by HPr (His230). Asp244 contacts sn-glycerol 3-phosphate. The glycerol site is built by Asp244 and Gln245. Residues Thr266 and Gly309 each contribute to the ADP site. 4 residues coordinate ATP: Thr266, Gly309, Gln313, and Gly410. ADP is bound by residues Gly410 and Asn414.

Belongs to the FGGY kinase family. As to quaternary structure, homotetramer and homodimer (in equilibrium). Post-translationally, the phosphoenolpyruvate-dependent sugar phosphotransferase system (PTS), including enzyme I, and histidine-containing protein (HPr) are required for the phosphorylation, which leads to the activation of the enzyme.

It catalyses the reaction glycerol + ATP = sn-glycerol 3-phosphate + ADP + H(+). Its pathway is polyol metabolism; glycerol degradation via glycerol kinase pathway; sn-glycerol 3-phosphate from glycerol: step 1/1. Activated by phosphorylation and inhibited by fructose 1,6-bisphosphate (FBP). Its function is as follows. Key enzyme in the regulation of glycerol uptake and metabolism. Catalyzes the phosphorylation of glycerol to yield sn-glycerol 3-phosphate. The polypeptide is Glycerol kinase (Bacillus anthracis (strain A0248)).